The following is a 229-amino-acid chain: MHCRIPDTQDTHRLGGIGMTSQRTRNRLIRRLQANGIRDTRVLETMAREPRHLFVDEALAHRAYEDTALPLGHGQTLSQPWIVARMTELVLTARPRRVLEVGTGSGYQTLILARLVEAVWSIERIGALHQRAAARLAMLGADNVRLRHEDGGHGWPQAAPYDVILLTACASVLPPELLAQLADGGELIAPLEDDAGRQWLTRVRRCGITFERTRLERVRFVPLLEGVIQ.

Residue Ser-78 is part of the active site.

It belongs to the methyltransferase superfamily. L-isoaspartyl/D-aspartyl protein methyltransferase family.

The protein resides in the cytoplasm. The enzyme catalyses [protein]-L-isoaspartate + S-adenosyl-L-methionine = [protein]-L-isoaspartate alpha-methyl ester + S-adenosyl-L-homocysteine. Functionally, catalyzes the methyl esterification of L-isoaspartyl residues in peptides and proteins that result from spontaneous decomposition of normal L-aspartyl and L-asparaginyl residues. It plays a role in the repair and/or degradation of damaged proteins. The polypeptide is Protein-L-isoaspartate O-methyltransferase (Chromohalobacter salexigens (strain ATCC BAA-138 / DSM 3043 / CIP 106854 / NCIMB 13768 / 1H11)).